We begin with the raw amino-acid sequence, 336 residues long: NADH-quinone oxidoreductase subunit H (336 aa).

A run of 8 helical transmembrane segments spans residues 14-34 (IIVA…AFLV), 82-102 (IIFL…WAVI), 115-135 (VGIL…IMAG), 161-181 (IGLV…SDVV), 186-206 (TVWF…SALA), 247-267 (ILMS…PLDV), 273-293 (VPGP…FVWV), and 312-332 (VFLP…VTFD).

It belongs to the complex I subunit 1 family. NDH-1 is composed of 14 different subunits. Subunits NuoA, H, J, K, L, M, N constitute the membrane sector of the complex.

It is found in the cell inner membrane. It catalyses the reaction a quinone + NADH + 5 H(+)(in) = a quinol + NAD(+) + 4 H(+)(out). In terms of biological role, NDH-1 shuttles electrons from NADH, via FMN and iron-sulfur (Fe-S) centers, to quinones in the respiratory chain. The immediate electron acceptor for the enzyme in this species is believed to be ubiquinone. Couples the redox reaction to proton translocation (for every two electrons transferred, four hydrogen ions are translocated across the cytoplasmic membrane), and thus conserves the redox energy in a proton gradient. This subunit may bind ubiquinone. In Rhodospirillum centenum (strain ATCC 51521 / SW), this protein is NADH-quinone oxidoreductase subunit H.